The sequence spans 129 residues: Sulfurtransferase TusD (129 aa).

Cys-79 serves as the catalytic Cysteine persulfide intermediate.

Belongs to the DsrE/TusD family. As to quaternary structure, heterohexamer, formed by a dimer of trimers. The hexameric TusBCD complex contains 2 copies each of TusB, TusC and TusD. The TusBCD complex interacts with TusE.

The protein resides in the cytoplasm. In terms of biological role, part of a sulfur-relay system required for 2-thiolation of 5-methylaminomethyl-2-thiouridine (mnm(5)s(2)U) at tRNA wobble positions. Accepts sulfur from TusA and transfers it in turn to TusE. The protein is Sulfurtransferase TusD of Pectobacterium carotovorum subsp. carotovorum (strain PC1).